A 483-amino-acid polypeptide reads, in one-letter code: Probable glycine dehydrogenase (decarboxylating) subunit 2 (483 aa).

At Lys264 the chain carries N6-(pyridoxal phosphate)lysine.

It belongs to the GcvP family. C-terminal subunit subfamily. The glycine cleavage system is composed of four proteins: P, T, L and H. In this organism, the P 'protein' is a heterodimer of two subunits. Pyridoxal 5'-phosphate is required as a cofactor.

It catalyses the reaction N(6)-[(R)-lipoyl]-L-lysyl-[glycine-cleavage complex H protein] + glycine + H(+) = N(6)-[(R)-S(8)-aminomethyldihydrolipoyl]-L-lysyl-[glycine-cleavage complex H protein] + CO2. Its function is as follows. The glycine cleavage system catalyzes the degradation of glycine. The P protein binds the alpha-amino group of glycine through its pyridoxal phosphate cofactor; CO(2) is released and the remaining methylamine moiety is then transferred to the lipoamide cofactor of the H protein. In Nitrosomonas eutropha (strain DSM 101675 / C91 / Nm57), this protein is Probable glycine dehydrogenase (decarboxylating) subunit 2.